Here is a 361-residue protein sequence, read N- to C-terminus: MAGNTIGQLFRVTTFGESHGLALGCIVDGVPPGIPLTEADLQHDLDRRRPGTSRYTTQRREPDQVKILSGVFEGVTTGTSIGLLIENTDQRSQDYSAIKDVFRPGHADYTYEQKYGLRDYRGGGRSSARETAMRVAAGAIAKKYLAEKFGIEIRGCLTQMGDIPLEIKDWSQVEQNPFFCPDPDKIDALDELMRALKKEGDSIGAKVTVVASGVPAGLGEPVFDRLDADIAHALMSINAVKGVEIGDGFDVVALRGSQNRDEITKDGFQSNHAGGILGGISSGQKIIAHMALKPTSSITVPGRTINRFGEEVEMITKGRHDPCVGIRAVPIAEAMLAIVLMDHLLRQRAQNADVKTDIPRW.

NADP(+) is bound by residues Arg48 and Arg54. FMN-binding positions include 125–127, 238–239, Gly278, 293–297, and Arg319; these read RSS, NA, and KPTSS.

The protein belongs to the chorismate synthase family. In terms of assembly, homotetramer. The cofactor is FMNH2.

It carries out the reaction 5-O-(1-carboxyvinyl)-3-phosphoshikimate = chorismate + phosphate. It functions in the pathway metabolic intermediate biosynthesis; chorismate biosynthesis; chorismate from D-erythrose 4-phosphate and phosphoenolpyruvate: step 7/7. Catalyzes the anti-1,4-elimination of the C-3 phosphate and the C-6 proR hydrogen from 5-enolpyruvylshikimate-3-phosphate (EPSP) to yield chorismate, which is the branch point compound that serves as the starting substrate for the three terminal pathways of aromatic amino acid biosynthesis. This reaction introduces a second double bond into the aromatic ring system. The sequence is that of Chorismate synthase from Escherichia coli O1:K1 / APEC.